The following is a 166-amino-acid chain: Small ribosomal subunit protein uS5 (166 aa).

Residues 11–74 (LQEKLIAVNR…EQAKRNLNKV (64 aa)) enclose the S5 DRBM domain.

It belongs to the universal ribosomal protein uS5 family. Part of the 30S ribosomal subunit. Contacts proteins S4 and S8.

Its function is as follows. With S4 and S12 plays an important role in translational accuracy. Located at the back of the 30S subunit body where it stabilizes the conformation of the head with respect to the body. The protein is Small ribosomal subunit protein uS5 of Aeromonas hydrophila subsp. hydrophila (strain ATCC 7966 / DSM 30187 / BCRC 13018 / CCUG 14551 / JCM 1027 / KCTC 2358 / NCIMB 9240 / NCTC 8049).